We begin with the raw amino-acid sequence, 456 residues long: uncharacterized protein (456 aa).

Residues 415–428 (SNSNGSSSSGNSSS) are compositionally biased toward low complexity. The disordered stretch occupies residues 415–444 (SNSNGSSSSGNSSSIYNSHLMNDKKKNNNA).

This is an uncharacterized protein from Saccharomyces cerevisiae (strain ATCC 204508 / S288c) (Baker's yeast).